A 580-amino-acid polypeptide reads, in one-letter code: Microcin-J25 export ATP-binding/permease protein McjD (580 aa).

6 consecutive transmembrane segments (helical) span residues 25 to 45 (FFSM…SPLI), 66 to 86 (VLLA…VFLF), 143 to 163 (VSQN…VVLS), 167 to 187 (WFSA…NTRL), 261 to 281 (AVIL…NGVV), and 286 to 306 (FIMI…IGAL). Residues 25–312 (FFSMLFITSL…IGALLSEIRQ (288 aa)) enclose the ABC transmembrane type-1 domain. The region spanning 345-578 (LSIRELSFSY…NEYISGLASV (234 aa)) is the ABC transporter domain. ATP is bound at residue 378–385 (GPSGSGKS).

It belongs to the ABC transporter superfamily. As to quaternary structure, homodimer.

Its subcellular location is the cell inner membrane. In terms of biological role, is able to protect a cell, which harbors the plasmid pTUC100 encoding microcin J25, against microcin J25. Is required for microcin J25 export out of the producing cells. This Escherichia coli protein is Microcin-J25 export ATP-binding/permease protein McjD (mcjD).